The sequence spans 183 residues: ATP-dependent protease subunit HslV (183 aa).

The active site involves Thr13. Na(+) contacts are provided by Gly168, Cys171, and Thr174.

Belongs to the peptidase T1B family. HslV subfamily. In terms of assembly, a double ring-shaped homohexamer of HslV is capped on each side by a ring-shaped HslU homohexamer. The assembly of the HslU/HslV complex is dependent on binding of ATP.

The protein resides in the cytoplasm. It catalyses the reaction ATP-dependent cleavage of peptide bonds with broad specificity.. Its activity is regulated as follows. Allosterically activated by HslU binding. In terms of biological role, protease subunit of a proteasome-like degradation complex believed to be a general protein degrading machinery. The protein is ATP-dependent protease subunit HslV of Stenotrophomonas maltophilia (strain R551-3).